The following is a 118-amino-acid chain: V-type proton ATPase subunit G 3 (118 aa).

Polar residues predominate over residues 1–12 (MTSQSQGIQQLL). A disordered region spans residues 1–44 (MTSQSQGIQQLLQAEKRAKDKLDEAKKRKGKRLRQAKEEAVAET). The stretch at 5-53 (SQGIQQLLQAEKRAKDKLDEAKKRKGKRLRQAKEEAVAETDQYRMQMEK) forms a coiled coil. Residues 14–26 (AEKRAKDKLDEAK) are compositionally biased toward basic and acidic residues.

This sequence belongs to the V-ATPase G subunit family. V-ATPase is a heteromultimeric enzyme made up of two complexes: the ATP-hydrolytic V1 complex and the proton translocation V0 complex. The V1 complex consists of three catalytic AB heterodimers that form a heterohexamer, three peripheral stalks each consisting of EG heterodimers, one central rotor including subunits D and F, and the regulatory subunits C and H. The proton translocation complex V0 consists of the proton transport subunit a, a ring of proteolipid subunits c9c'', rotary subunit d, subunits e and f, and the accessory subunits ATP6AP1/Ac45 and ATP6AP2/PRR. In terms of tissue distribution, kidney.

In terms of biological role, subunit of the V1 complex of vacuolar(H+)-ATPase (V-ATPase), a multisubunit enzyme composed of a peripheral complex (V1) that hydrolyzes ATP and a membrane integral complex (V0) that translocates protons. V-ATPase is responsible for acidifying and maintaining the pH of intracellular compartments and in some cell types, is targeted to the plasma membrane, where it is responsible for acidifying the extracellular environment. This chain is V-type proton ATPase subunit G 3 (Atp6v1g3), found in Mus musculus (Mouse).